A 295-amino-acid chain; its full sequence is Protease HtpX homolog (295 aa).

2 helical membrane passes run 15-35 (LVMA…GYAF) and 39-59 (AQTG…VILG). Position 143 (H143) interacts with Zn(2+). Residue E144 is part of the active site. A Zn(2+)-binding site is contributed by H147. The next 2 helical transmembrane spans lie at 159-179 (ALAL…AMWW) and 195-215 (VIML…ASMA). Zn(2+) is bound at residue E224.

The protein belongs to the peptidase M48B family. It depends on Zn(2+) as a cofactor.

The protein localises to the cell membrane. In Ligilactobacillus salivarius (strain UCC118) (Lactobacillus salivarius), this protein is Protease HtpX homolog.